The sequence spans 295 residues: Adrenocorticotropic hormone receptor (295 aa).

Topologically, residues 1 to 23 are extracellular; sequence MRHILNLYENINSTARNNSDCPA. 2 N-linked (GlcNAc...) asparagine glycosylation sites follow: Asn-12 and Asn-17. 2 disulfides stabilise this stretch: Cys-21–Cys-253 and Cys-245–Cys-251. A helical membrane pass occupies residues 24–49; that stretch reads VILPEEIFFTVSIVGVLENLMVLLAV. Residues 50–58 are Cytoplasmic-facing; it reads AKNKSLQSP. A helical transmembrane segment spans residues 59-79; the sequence is MYFFICSLAISDMLGSLYKIL. Over 80–104 the chain is Extracellular; sequence ENVLIMFRNMGYLEPRGSFESTADD. The chain crosses the membrane as a helical span at residues 105–126; it reads VVDSLFILSLLGSICSLSVIAA. The Cytoplasmic portion of the chain corresponds to 127–147; that stretch reads DRYITIFHALQYHSIVTMHRA. A helical transmembrane segment spans residues 148 to 168; it reads LVVLTVLWAGCTGSGITIVTF. Residues 169–180 are Extracellular-facing; sequence SHHVPTVIAFTA. The helical transmembrane segment at 181–199 threads the bilayer; it reads LFPLMLAFILCLYVHMFLL. Residues 200–217 are Cytoplasmic-facing; it reads ARSHARRTSSLPKANMRG. A helical transmembrane segment spans residues 218–244; sequence AITLTVLLGVFIFCWAPFVLHVLLMTF. Topologically, residues 245 to 256 are extracellular; the sequence is CPADPYCACYMS. The helical transmembrane segment at 257–278 threads the bilayer; that stretch reads LFQVNGVLIMCNAVIDPFIYAF. Over 279-295 the chain is Cytoplasmic; sequence RSPELRVAFKKMVICNW. Cys-293 carries S-palmitoyl cysteine lipidation.

Belongs to the G-protein coupled receptor 1 family. In terms of assembly, homodimer. Interacts with corticotropin (ACTH). Interacts with MRAP; this interaction targets MC2R to the plasma membrane. Interacts with MRAP2; competing with MRAP for binding to MC2R and impairing the binding of corticotropin (ACTH). Ubiquitinated by MGRN1 that may be involved in post-endocytic trafficking and/or degradation of internalized receptor.

It localises to the cell membrane. Hormone receptor primarily expressed in adrenal cortex that plays a key role in regulating adrenocortical function. Upon corticotropin (ACTH) binding, facilitates the release of adrenal glucocorticoids, including cortisol and corticosterone. In addition, MC2R is required for fetal and neonatal adrenal gland development. Mechanistically, activates adenylate cyclase (cAMP), the MAPK cascade as well as the cAMP-dependent protein kinase A pathway leading to steroidogenic factor 1/NR5A1-mediated transcriptional activation. This chain is Adrenocorticotropic hormone receptor (MC2R), found in Ovis aries (Sheep).